The following is a 200-amino-acid chain: Large ribosomal subunit protein bL25 (200 aa).

Belongs to the bacterial ribosomal protein bL25 family. CTC subfamily. As to quaternary structure, part of the 50S ribosomal subunit; part of the 5S rRNA/L5/L18/L25 subcomplex. Contacts the 5S rRNA. Binds to the 5S rRNA independently of L5 and L18.

This is one of the proteins that binds to the 5S RNA in the ribosome where it forms part of the central protuberance. The chain is Large ribosomal subunit protein bL25 from Corynebacterium glutamicum (strain ATCC 13032 / DSM 20300 / JCM 1318 / BCRC 11384 / CCUG 27702 / LMG 3730 / NBRC 12168 / NCIMB 10025 / NRRL B-2784 / 534).